Here is a 1024-residue protein sequence, read N- to C-terminus: MAQGAMRFCSEGDCAISPPRCPRRWLPEGPVPQSPPASMYGSTGSLLRRVAGPGPRGRELGRVTAPCTPLRGPPSPRVAPSPWAPSSPTGQPPPGAQSSVVIFRFVEKASVRPLNGLPAPGGLSRSWDLGGVSPPRPTPALGPGSNRKLRLEASTSDPLPARGGSALPGSRNLVHGPPAPPQVGADGLYSSLPNGLGGPPERLATLFGGPADTGFLNQGDTWSSPREVSSHAQRIARAKWEFFYGSLDPPSSGAKPPEQAPPSPPGVGSRQGSGVAVGRAAKYSETDLDTVPLRCYRETDIDEVLAEREEADSAIESQPSSEGPPGTAYPPAPRPGPLPGPHPSLGSGNEDEDDDEAGGEEDVDDEVFEASEGARPGSRMPLKSPVPFLPGTSPSADGPDSFSCVFEAILESHRAKGTSYTSLASLEALASPGPTQSPFFTFELPPQPPAPRPDPPAPAPLAPLEPDSGTSSAADGPWTQRGEEEEAEARAKLAPGREPPSPCHSEDSLGLGAAPLGSEPPLSQLVSDSDSELDSTERLALGSTDTLSNGQKADLEAAQRLAKRLYRLDGFRKADVARHLGKNNDFSKLVAGEYLKFFVFTGMTLDQALRVFLKELALMGETQERERVLAHFSQRYFQCNPEALSSEDGAHTLTCALMLLNTDLHGHNIGKRMTCGDFIGNLEGLNDGGDFPRELLKALYSSIKNEKLQWAIDEEELRRSLSELADPNPKVIKRISGGSGSGSSPFLDLTPEPGAAVYKHGALVRKVHADPDCRKTPRGKRGWKSFHGILKGMILYLQKEEYKPGKALSETELKNAISIHHALATRASDYSKRPHVFYLRTADWRVFLFQAPSLEQMQSWITRINVVAAMFSAPPFPAAVSSQKKFSRPLLPSAATRLSQEEQVRTHEAKLKAMASELREHRAAQLGKKGRGKEAEEQRQKEAYLEFEKSRYSTYAALLRVKLKAGSEELDAVEAALAQAGSTEDGLPPSHSSPSLQPKPSSQPRAQRHSSEPRPGAGSGRRKP.

Disordered stretches follow at residues 25–98 (WLPE…GAQS), 113–230 (PLNG…EVSS), 246–401 (SLDP…GPDS), and 430–536 (ASPG…LDST). The span at 71-95 (RGPPSPRVAPSPWAPSSPTGQPPPG) shows a compositional bias: pro residues. 2 positions are modified to phosphoserine: serine 126 and serine 156. A compositionally biased stretch (polar residues) spans 215–230 (FLNQGDTWSSPREVSS). Over residues 300–313 (DIDEVLAEREEADS) the composition is skewed to acidic residues. Residues 327–342 (TAYPPAPRPGPLPGPH) show a composition bias toward pro residues. Residues 349–369 (NEDEDDDEAGGEEDVDDEVFE) are compositionally biased toward acidic residues. Over residues 445-463 (PPQPPAPRPDPPAPAPLAP) the composition is skewed to pro residues. An SEC7 domain is found at 512–706 (GAAPLGSEPP…KALYSSIKNE (195 aa)). Residue serine 720 is modified to Phosphoserine. Positions 756 to 869 (AVYKHGALVR…WITRINVVAA (114 aa)) constitute a PH domain. Residues 898 to 924 (LSQEEQVRTHEAKLKAMASELREHRAA) are a coiled coil. The interval 976–1024 (ALAQAGSTEDGLPPSHSSPSLQPKPSSQPRAQRHSSEPRPGAGSGRRKP) is disordered. Residues 987 to 1004 (LPPSHSSPSLQPKPSSQP) show a composition bias toward low complexity.

Belongs to the PSD family. Interacts with ACTN1. Interacts (ARF6-bound form) with KCNK1; does not interact with KCNK1 in the absence of ARF6. Isoform 2 is expressed in the brain.

It localises to the cell membrane. The protein resides in the cell projection. The protein localises to the ruffle membrane. Its subcellular location is the cleavage furrow. Functionally, guanine nucleotide exchange factor for ARF6. Induces cytoskeletal remodeling. This Homo sapiens (Human) protein is PH and SEC7 domain-containing protein 1 (PSD).